The primary structure comprises 455 residues: Glutamyl-tRNA reductase (455 aa).

Substrate is bound by residues 49–52 (TCNR), Ser109, 114–116 (ETQ), and Gln120. Cys50 functions as the Nucleophile in the catalytic mechanism. NADP(+) is bound at residue 189 to 194 (GAGKMG).

It belongs to the glutamyl-tRNA reductase family. As to quaternary structure, homodimer.

It carries out the reaction (S)-4-amino-5-oxopentanoate + tRNA(Glu) + NADP(+) = L-glutamyl-tRNA(Glu) + NADPH + H(+). It participates in porphyrin-containing compound metabolism; protoporphyrin-IX biosynthesis; 5-aminolevulinate from L-glutamyl-tRNA(Glu): step 1/2. Its function is as follows. Catalyzes the NADPH-dependent reduction of glutamyl-tRNA(Glu) to glutamate 1-semialdehyde (GSA). In Geobacillus thermodenitrificans (strain NG80-2), this protein is Glutamyl-tRNA reductase.